Here is a 358-residue protein sequence, read N- to C-terminus: Bis(monoacylglycero)phosphate synthase CLN5 (358 aa).

Over 1-23 (MAQEVDTAQGAEMRRGAGAARGR) the chain is Cytoplasmic. Residues 24–40 (ASWCWALALLWLAVVPG) form a helical; Signal-anchor for type II membrane protein membrane-spanning segment. Topologically, residues 41-358 (WSRVSGIPSR…PIRNKTLSGL (318 aa)) are lumenal. Intrachain disulfides connect Cys-70/Cys-159 and Cys-77/Cys-165. His-117 acts as the Proton acceptor in catalysis. N-linked (GlcNAc...) asparagine glycans are attached at residues Asn-130, Asn-143, Asn-178, and Asn-203. Cys-231 serves as the catalytic Nucleophile; Acyl-thioester intermediate. Asn-255, Asn-271, and Asn-281 each carry an N-linked (GlcNAc...) asparagine glycan. The interval 304–343 (FLLSLLQIFDAVIVHKQFYLFYNFEYWFLPMKFPFIKITY) is membrane-anchoring. N-linked (GlcNAc...) asparagine glycosylation is present at Asn-352.

This sequence belongs to the CLN5 family. In terms of assembly, multimer. Interacts with SORT1, RAB5A and RAB7A. Interacts with PPT1, TPP1, CLN3, CLN6, CLN8, ATP5F1A and ATP5F1B. Post-translationally, N-glycosylated with both high mannose and complex type sugars. Glycosylation is important for proper folding and trafficking to the lysosomes. The type II membrane signal anchor is proteolytically cleaved to produce a mature form that is transported to the lysosomes (Bis(monoacylglycero)phosphate synthase CLN5, secreted form). In terms of processing, can undergo proteolytic cleavage at the C-terminus, probably by a cysteine protease and may involve the removal of approximately 10-15 residues from the C-terminal end. In terms of tissue distribution, ubiquitous.

It localises to the lysosome. The protein resides in the membrane. It carries out the reaction S-hexadecanoyl-L-cysteinyl-[protein] + H2O = L-cysteinyl-[protein] + hexadecanoate + H(+). The catalysed reaction is 2 1-acyl-sn-glycero-3-phospho-(1'-sn-glycerol) = 1-acyl-sn-glycero-3-phospho-(3'-acyl-sn-1'-glycerol) + sn-glycero-3-phospho-(1'-sn-glycerol). The enzyme catalyses 2 1-(9Z-octadecenoyl)-sn-glycero-3-phospho-(1'-sn-glycerol) = 1-(9Z-octadecenoyl)-sn-glycero-3-phospho-(3'-(9Z-octadecenoyl)-1'-sn-glycerol) + sn-glycero-3-phospho-(1'-sn-glycerol). It catalyses the reaction 2 1-octadecanoyl-sn-glycero-3-phospho-(1'-sn-glycerol) = 1-octadecanoyl-sn-glycero-3-phospho-(3'-octadecanoyl-1'-sn-glycerol) + sn-glycero-3-phospho-(1'-sn-glycerol). It carries out the reaction 2 1-hexadecanoyl-sn-glycero-3-phospho-(1'-sn-glycerol) = 1-hexadecanoyl-sn-glycero-3-phospho-(3'-hexadecanoyl-1'-sn-glycerol) + sn-glycero-3-phospho-(1'-sn-glycerol). The catalysed reaction is 2 1-tetradecanoyl-sn-glycero-3-phospho-(1'-sn-glycerol) = 1-tetradecanoyl-sn-glycero-3-phospho-(3'-tetradecanoyl-1'-sn-glycerol) + sn-glycero-3-phospho-(1'-sn-glycerol). Its activity is regulated as follows. Anionic phospholipids activate bis(monoacylglycero)phosphate (BMP) synthase activity. Amiodarone, a cationic amphiphilic drug inhibits BMP synthase activity towards liposomal lysophosphatidylglycerol. Palmostatin B inhibits palmitoyl protein thioesterase activity. Catalyzes the synthesis of bis(monoacylglycero)phosphate (BMP) via transacylation of 2 molecules of lysophosphatidylglycerol (LPG). BMP also known as lysobisphosphatidic acid plays a key role in the formation of intraluminal vesicles and in maintaining intracellular cholesterol homeostasis. Can use only LPG as the exclusive lysophospholipid acyl donor for base exchange and displays BMP synthase activity towards various LPGs (LPG 14:0, LPG 16:0, LPG 18:0, LPG 18:1) with a higher preference for longer chain lengths. Plays a role in influencing the retrograde trafficking of lysosomal sorting receptors SORT1 and IGF2R from the endosomes to the trans-Golgi network by controlling the recruitment of retromer complex to the endosomal membrane. Regulates the localization and activation of RAB7A which is required to recruit the retromer complex to the endosomal membrane. In terms of biological role, exhibits palmitoyl protein thioesterase (S-depalmitoylation) activity in vitro and most likely plays a role in protein S-depalmitoylation. This is Bis(monoacylglycero)phosphate synthase CLN5 (CLN5) from Homo sapiens (Human).